The sequence spans 701 residues: Polyribonucleotide nucleotidyltransferase (701 aa).

Asp487 and Asp493 together coordinate Mg(2+). Residues 553–612 (PRLYTLRINPDKIRDVIGKGGSVIRALTEETGTSIDIAEDGLITIASVSAEGAEEAKRRI) form the KH domain. In terms of domain architecture, S1 motif spans 622–692 (GKIYEGTVVK…ERGRIRLSIK (71 aa)).

The protein belongs to the polyribonucleotide nucleotidyltransferase family. Requires Mg(2+) as cofactor.

The protein resides in the cytoplasm. It carries out the reaction RNA(n+1) + phosphate = RNA(n) + a ribonucleoside 5'-diphosphate. In terms of biological role, involved in mRNA degradation. Catalyzes the phosphorolysis of single-stranded polyribonucleotides processively in the 3'- to 5'-direction. In Laribacter hongkongensis (strain HLHK9), this protein is Polyribonucleotide nucleotidyltransferase.